The sequence spans 152 residues: Natriuretic peptides A (152 aa).

The N-terminal stretch at 1–24 (MGSSAITTSFLLFVAFQLPGQTGA) is a signal peptide. 2 consecutive propeptides follow at residues 25-122 (NPVY…TAPR) and 92-102 (EMGAPSDGDPG). The interval 50 to 108 (MPLEDEAVPSQVLSEQNEEAGAPLSPLSEVPPWDGGRSTQPREMGAPSDGDPGNPPRSV) is disordered. The residue at position 128 (Ser128) is a Phosphoserine. The cysteines at positions 129 and 145 are disulfide-linked. Residues 146–150 (NSFRY) form an important for degradation of atrial natriuretic peptide by IDE region.

It belongs to the natriuretic peptide family. In terms of assembly, homodimer; disulfide-linked antiparallel dimer. The precursor molecule is proteolytically cleaved by CORIN at Arg-122 to produce the atrial natriuretic peptide. Undergoes further proteolytic cleavage by unknown proteases to give rise to long-acting natriuretic peptide, vessel dilator and kaliuretic peptide. Additional processing gives rise to the auriculin and atriopeptin peptides. In the kidneys, alternative processing by an unknown protease results in the peptide urodilatin. Post-translationally, cleavage by MME initiates degradation of the factor and thereby regulates its activity. Degradation by IDE results in reduced activation of NPR1 (in vitro). During IDE degradation, the resulting products can temporarily stimulate NPR2 to produce cGMP, before the fragments are completely degraded and inactivated by IDE (in vitro). In terms of processing, degraded by IDE. Phosphorylation on Ser-128 decreases vasorelaxant activity.

The protein localises to the secreted. It is found in the perikaryon. The protein resides in the cell projection. Functionally, hormone that plays a key role in mediating cardio-renal homeostasis, and is involved in vascular remodeling and regulating energy metabolism. Acts by specifically binding and stimulating NPR1 to produce cGMP, which in turn activates effector proteins, such as PRKG1, that drive various biological responses. Regulates vasodilation, natriuresis, diuresis and aldosterone synthesis and is therefore essential for regulating blood pressure, controlling the extracellular fluid volume and maintaining the fluid-electrolyte balance. Also involved in inhibiting cardiac remodeling and cardiac hypertrophy by inducing cardiomyocyte apoptosis and attenuating the growth of cardiomyocytes and fibroblasts. Plays a role in female pregnancy by promoting trophoblast invasion and spiral artery remodeling in uterus, and thus prevents pregnancy-induced hypertension. In adipose tissue, acts in various cGMP- and PKG-dependent pathways to regulate lipid metabolism and energy homeostasis. This includes up-regulating lipid metabolism and mitochondrial oxygen utilization by activating the AMP-activated protein kinase (AMPK), and increasing energy expenditure by acting via MAPK11 to promote the UCP1-dependent thermogenesis of brown adipose tissue. Binds the clearance receptor NPR3 which removes the hormone from circulation. In terms of biological role, may have a role in cardio-renal homeostasis through regulation of natriuresis, diuresis, vasodilation, and inhibiting aldosterone synthesis. In vitro, promotes the production of cGMP and induces vasodilation. May promote natriuresis, at least in part, by enhancing prostaglandin E2 synthesis resulting in the inhibition of renal Na+-K+-ATPase. However reports on the involvement of this peptide in mammal blood volume and blood pressure homeostasis are conflicting; according to a report, in vivo it is not sufficient to activate cGMP and does not inhibit collecting duct transport nor effect diuresis and natriuresis. Appears to bind to specific receptors that are distinct from the receptors bound by atrial natriuretic peptide and vessel dilator. Possibly enhances protein excretion in urine by decreasing proximal tubular protein reabsorption. May have a role in cardio-renal homeostasis through regulation of natriuresis, diuresis, and vasodilation. In vitro, promotes the production of cGMP and induces vasodilation. May promote natriuresis, at least in part, by enhancing prostaglandin E2 synthesis resulting in the inhibition of renal Na+-K+-ATPase. However reports on the involvement of this peptide in mammal blood volume and blood pressure homeostasis are conflicting; according to a report it is not sufficient to activate cGMP and does not inhibit collecting duct transport nor effect diuresis and natriuresis. Appears to bind to specific receptors that are distinct from the receptors bound by the atrial natriuretic and long-acting natriuretic peptides. Possibly functions in protein excretion in urine by maintaining the integrity of the proximal tubules and enhancing protein excretion by decreasing proximal tubular protein reabsorption. Its function is as follows. May have a role in cardio-renal homeostasis through regulation of diuresis and inhibiting aldosterone synthesis. In vitro, promotes the production of cGMP and induces vasodilation. May promote natriuresis, at least in part, by enhancing prostaglandin E2 synthesis resulting in the inhibition of renal Na+-K+-ATPase. May have a role in potassium excretion but not sodium excretion (natriuresis). Possibly enhances protein excretion in urine by decreasing proximal tubular protein reabsorption. Functionally, hormone produced in the kidneys that appears to be important for maintaining cardio-renal homeostasis. Mediates vasodilation, natriuresis and diuresis primarily in the renal system, in order to maintain the extracellular fluid volume and control the fluid-electrolyte balance. Specifically binds and stimulates cGMP production by renal transmembrane receptors, likely NPR1. Urodilatin not ANP, may be the natriuretic peptide responsible for the regulation of sodium and water homeostasis in the kidney. In terms of biological role, may have a role in cardio-renal homeostasis through regulation of natriuresis and vasodilation. In vivo promotes natriuresis and in vitro, vasodilates renal artery strips. May have a role in cardio-renal homeostasis through regulation of regulation of natriuresis and vasodilation. In vivo promotes natriuresis. In vitro, vasodilates intestinal smooth muscle but not smooth muscle strips. Its function is as follows. May have a role in cardio-renal homeostasis through regulation of natriuresis and vasodilation. In vivo promotes natriuresis. In vitro, selectively vasodilates intestinal and vascular smooth muscle strips. Functionally, may have a role in cardio-renal homeostasis through regulation of natriuresis and vasodilation. In vivo promotes natriuresis. In vitro, selectively vasodilates intestinal smooth muscle but not vascular smooth muscle strips. The sequence is that of Natriuretic peptides A (NPPA) from Ovis aries (Sheep).